Reading from the N-terminus, the 218-residue chain is Cytidylate kinase (218 aa).

Residue 10–18 (GPAAAGKST) participates in ATP binding.

It belongs to the cytidylate kinase family. Type 1 subfamily.

The protein resides in the cytoplasm. It catalyses the reaction CMP + ATP = CDP + ADP. The catalysed reaction is dCMP + ATP = dCDP + ADP. The protein is Cytidylate kinase of Staphylococcus haemolyticus (strain JCSC1435).